A 194-amino-acid chain; its full sequence is Imidazoleglycerol-phosphate dehydratase (194 aa).

Belongs to the imidazoleglycerol-phosphate dehydratase family.

The protein resides in the cytoplasm. The enzyme catalyses D-erythro-1-(imidazol-4-yl)glycerol 3-phosphate = 3-(imidazol-4-yl)-2-oxopropyl phosphate + H2O. It functions in the pathway amino-acid biosynthesis; L-histidine biosynthesis; L-histidine from 5-phospho-alpha-D-ribose 1-diphosphate: step 6/9. This is Imidazoleglycerol-phosphate dehydratase from Lacticaseibacillus casei (strain BL23) (Lactobacillus casei).